Reading from the N-terminus, the 513-residue chain is Maturase K (513 aa).

It belongs to the intron maturase 2 family. MatK subfamily.

Its subcellular location is the plastid. The protein resides in the chloroplast. Its function is as follows. Usually encoded in the trnK tRNA gene intron. Probably assists in splicing its own and other chloroplast group II introns. The chain is Maturase K from Zea mays (Maize).